The primary structure comprises 670 residues: Carnitine O-acetyltransferase, mitochondrial (670 aa).

H378 functions as the Proton acceptor in the catalytic mechanism. CoA-binding positions include K461 and K465–D472. Y494 contributes to the (R)-carnitine binding site. S498 is a CoA binding site. Residue T507 coordinates (R)-carnitine. Position 597 (Q597) interacts with CoA. The Microbody targeting signal motif lies at A668–L670.

It belongs to the carnitine/choline acetyltransferase family.

Its subcellular location is the mitochondrion inner membrane. The protein resides in the peroxisome. It carries out the reaction (R)-carnitine + acetyl-CoA = O-acetyl-(R)-carnitine + CoA. In terms of biological role, carnitine acetylase is specific for short chain fatty acids. Carnitine acetylase seems to affect the flux through the pyruvate dehydrogenase complex. It may be involved as well in the transport of acetyl-CoA into mitochondria. The chain is Carnitine O-acetyltransferase, mitochondrial (CAT2) from Saccharomyces cerevisiae (strain ATCC 204508 / S288c) (Baker's yeast).